A 340-amino-acid chain; its full sequence is UDP-3-O-acylglucosamine N-acyltransferase (340 aa).

The Proton acceptor role is filled by His238.

This sequence belongs to the transferase hexapeptide repeat family. LpxD subfamily. Homotrimer.

The catalysed reaction is a UDP-3-O-[(3R)-3-hydroxyacyl]-alpha-D-glucosamine + a (3R)-hydroxyacyl-[ACP] = a UDP-2-N,3-O-bis[(3R)-3-hydroxyacyl]-alpha-D-glucosamine + holo-[ACP] + H(+). Its pathway is bacterial outer membrane biogenesis; LPS lipid A biosynthesis. Functionally, catalyzes the N-acylation of UDP-3-O-acylglucosamine using 3-hydroxyacyl-ACP as the acyl donor. Is involved in the biosynthesis of lipid A, a phosphorylated glycolipid that anchors the lipopolysaccharide to the outer membrane of the cell. This chain is UDP-3-O-acylglucosamine N-acyltransferase, found in Psychromonas ingrahamii (strain DSM 17664 / CCUG 51855 / 37).